Reading from the N-terminus, the 116-residue chain is Small ribosomal subunit protein bS16 (116 aa).

The disordered stretch occupies residues 88–116 (RNNPKAAVPGKRMAELAKKKADRAAASAE). The segment covering 99 to 110 (RMAELAKKKADR) has biased composition (basic and acidic residues).

It belongs to the bacterial ribosomal protein bS16 family.

In Cereibacter sphaeroides (strain ATCC 17029 / ATH 2.4.9) (Rhodobacter sphaeroides), this protein is Small ribosomal subunit protein bS16.